Reading from the N-terminus, the 371-residue chain is 3-isopropylmalate dehydrogenase (371 aa).

Substrate contacts are provided by R104, R114, R142, and D232. Residues D232, D256, and D260 each coordinate Mg(2+). 290–302 (GSAPDIAGQDKAN) is a binding site for NAD(+).

Belongs to the isocitrate and isopropylmalate dehydrogenases family. LeuB type 1 subfamily. As to quaternary structure, homodimer. Requires Mg(2+) as cofactor. It depends on Mn(2+) as a cofactor.

The protein resides in the cytoplasm. The catalysed reaction is (2R,3S)-3-isopropylmalate + NAD(+) = 4-methyl-2-oxopentanoate + CO2 + NADH. It functions in the pathway amino-acid biosynthesis; L-leucine biosynthesis; L-leucine from 3-methyl-2-oxobutanoate: step 3/4. In terms of biological role, catalyzes the oxidation of 3-carboxy-2-hydroxy-4-methylpentanoate (3-isopropylmalate) to 3-carboxy-4-methyl-2-oxopentanoate. The product decarboxylates to 4-methyl-2 oxopentanoate. The polypeptide is 3-isopropylmalate dehydrogenase (Synechococcus sp. (strain JA-2-3B'a(2-13)) (Cyanobacteria bacterium Yellowstone B-Prime)).